The chain runs to 333 residues: Adenosine deaminase (333 aa).

Residues His12 and His14 each contribute to the Zn(2+) site. Positions 14, 16, and 170 each coordinate substrate. His197 is a binding site for Zn(2+). Glu200 functions as the Proton donor in the catalytic mechanism. Asp278 contributes to the Zn(2+) binding site. Asp279 lines the substrate pocket.

It belongs to the metallo-dependent hydrolases superfamily. Adenosine and AMP deaminases family. Adenosine deaminase subfamily. It depends on Zn(2+) as a cofactor.

It carries out the reaction adenosine + H2O + H(+) = inosine + NH4(+). The enzyme catalyses 2'-deoxyadenosine + H2O + H(+) = 2'-deoxyinosine + NH4(+). Its function is as follows. Catalyzes the hydrolytic deamination of adenosine and 2-deoxyadenosine. The polypeptide is Adenosine deaminase (Proteus mirabilis (strain HI4320)).